Consider the following 1356-residue polypeptide: Transmembrane protein 94 (1356 aa).

Residues 1–64 (MDLKEKHLGE…FLHHSNRCSC (64 aa)) lie on the Cytoplasmic side of the membrane. Residues 65–85 (FHWPGASLMLLAVLLLLGCCG) traverse the membrane as a helical segment. Over 86-92 (GQPAGSR) the chain is Lumenal. A helical membrane pass occupies residues 93-113 (GVGLVNASALFLLLLLNLVLI). Topologically, residues 114–273 (GRQDRLKRRE…RPVTALDNER (160 aa)) are cytoplasmic. 2 positions are modified to phosphoserine: Ser221 and Ser225. The chain crosses the membrane as a helical span at residues 274-294 (FTVQSVMLHYAVPVVLAGFLI). At 295–320 (TNALRFIFSAPGVTSWQYTLLQLQVN) the chain is on the lumenal side. A helical membrane pass occupies residues 321–341 (GVLPILPLLFPVLWVLATACG). Over 342–1092 (EARVLAQMSK…RHATYGIRKC (751 aa)) the chain is Cytoplasmic. The DKQGIL motif lies at 417-422 (DKQGIL). Disordered regions lie at residues 439-461 (VEPP…FCHP) and 483-541 (EQER…ESDP). Positions 440-449 (EPPHSSHEDL) are enriched in basic and acidic residues. A phosphoserine mark is found at Ser444, Ser445, and Ser454. A compositionally biased stretch (basic residues) spans 502-511 (HHKAHGRSKH). Residues Ser513, Ser518, Ser798, and Ser941 each carry the phosphoserine modification. The chain crosses the membrane as a helical span at residues 1093–1113 (FLFLLQCQLTLVVIQFLSCLV). The Lumenal portion of the chain corresponds to 1114–1120 (QLPPLLS). The helical transmembrane segment at 1121–1141 (TTDILWLSCFCYPLLSISLLG) threads the bilayer. Over 1142 to 1167 (KPPHSSIMSMATGKNLQSIPKKTQHY) the chain is Cytoplasmic. A helical transmembrane segment spans residues 1168–1188 (FLLCFLLKFSLTISSCLICFG). Over 1189–1228 (FTLQSFCDSSRDRNLTNCSSVMLPSNDDRAPAWFEDFANG) the chain is Lumenal. Asn1202 and Asn1205 each carry an N-linked (GlcNAc...) asparagine glycan. A helical transmembrane segment spans residues 1229–1249 (LLSAQKLTAALIVLHTVFISI). Over 1250-1261 (THVHRTKPLWRK) the chain is Cytoplasmic. The helical transmembrane segment at 1262–1282 (SPLTNLWWAVTVPVVLLGQVV) threads the bilayer. At 1283–1306 (QTAVDLQLWTHRDSHVHFGLEDVP) the chain is on the lumenal side. The helical transmembrane segment at 1307–1327 (LLTWLLGCLSLVLVVVTNEIV) threads the bilayer. The Cytoplasmic segment spans residues 1328–1356 (KLHEIRVRVRYQKRQKLQFETKLGMNSPF). A GMN; metal-binding motif motif is present at residues 1351–1353 (GMN).

As to quaternary structure, forms homooligomers. As to expression, expressed ubiquitously.

The protein localises to the endoplasmic reticulum membrane. Its function is as follows. Could function in the uptake of Mg(2+) from the cytosol into the endoplasmic reticulum and regulate intracellular Mg(2+) homeostasis. The protein is Transmembrane protein 94 of Homo sapiens (Human).